The chain runs to 344 residues: Heat-inducible transcription repressor HrcA (344 aa).

This sequence belongs to the HrcA family.

Negative regulator of class I heat shock genes (grpE-dnaK-dnaJ and groELS operons). Prevents heat-shock induction of these operons. This is Heat-inducible transcription repressor HrcA from Streptococcus uberis (strain ATCC BAA-854 / 0140J).